A 510-amino-acid chain; its full sequence is 2,3-bisphosphoglycerate-independent phosphoglycerate mutase (510 aa).

Residues aspartate 14 and serine 64 each contribute to the Mn(2+) site. Serine 64 acts as the Phosphoserine intermediate in catalysis. Substrate contacts are provided by residues histidine 125, 155-156 (RD), arginine 187, arginine 193, 259-262 (RADR), and lysine 332. Aspartate 399, histidine 403, aspartate 440, histidine 441, and histidine 459 together coordinate Mn(2+).

The protein belongs to the BPG-independent phosphoglycerate mutase family. As to quaternary structure, monomer. The cofactor is Mn(2+).

It catalyses the reaction (2R)-2-phosphoglycerate = (2R)-3-phosphoglycerate. It participates in carbohydrate degradation; glycolysis; pyruvate from D-glyceraldehyde 3-phosphate: step 3/5. Its function is as follows. Catalyzes the interconversion of 2-phosphoglycerate and 3-phosphoglycerate. Essential for the growth and pathogenicity on the host plant. The sequence is that of 2,3-bisphosphoglycerate-independent phosphoglycerate mutase from Pseudomonas syringae pv. tomato (strain ATCC BAA-871 / DC3000).